The chain runs to 378 residues: Mitogen-activated protein kinase mpkC (378 aa).

Residues 20–300 (YVNPQPIGMG…AQDALRHPYL (281 aa)) form the Protein kinase domain. ATP contacts are provided by residues 26–34 (IGMGSFGLV) and Lys-49. The active-site Proton acceptor is the Asp-141.

This sequence belongs to the protein kinase superfamily. Ser/Thr protein kinase family. MAP kinase subfamily. It depends on Mg(2+) as a cofactor.

Its subcellular location is the nucleus. It catalyses the reaction L-seryl-[protein] + ATP = O-phospho-L-seryl-[protein] + ADP + H(+). It carries out the reaction L-threonyl-[protein] + ATP = O-phospho-L-threonyl-[protein] + ADP + H(+). Activated by threonine and tyrosine phosphorylation. Functionally, mitogen-activated protein kinase (MAPK), part of the high-osmolarity glycerol (HOG) pathway. With sakA, plays a role in the osmotic and oxidative stress responses. Involved in paradoxical growth, the cell wall integrity (CWI) pathway and biofilm formation. SakA and mpkC collaborate during virulence and mpkC could act by modulating sakA activity upon exposure to several types of stresses and during cell wall biosynthesis. This Aspergillus fumigatus (strain CBS 144.89 / FGSC A1163 / CEA10) (Neosartorya fumigata) protein is Mitogen-activated protein kinase mpkC.